A 714-amino-acid polypeptide reads, in one-letter code: Fatty acid oxidation complex subunit alpha (714 aa).

Positions 1–190 are enoyl-CoA hydratase; it reads MEMASAFTLN…KLGLVDDVVP (190 aa). The 3-hydroxyacyl-CoA dehydrogenase stretch occupies residues 306–714; that stretch reads APLNSVGILG…FWKTTATDLQ (409 aa).

It in the N-terminal section; belongs to the enoyl-CoA hydratase/isomerase family. In the central section; belongs to the 3-hydroxyacyl-CoA dehydrogenase family. In terms of assembly, heterotetramer of two alpha chains (FadJ) and two beta chains (FadI).

Its subcellular location is the cytoplasm. It carries out the reaction a (3S)-3-hydroxyacyl-CoA = a (2E)-enoyl-CoA + H2O. The enzyme catalyses a 4-saturated-(3S)-3-hydroxyacyl-CoA = a (3E)-enoyl-CoA + H2O. It catalyses the reaction a (3S)-3-hydroxyacyl-CoA + NAD(+) = a 3-oxoacyl-CoA + NADH + H(+). The catalysed reaction is (3S)-3-hydroxybutanoyl-CoA = (3R)-3-hydroxybutanoyl-CoA. It participates in lipid metabolism; fatty acid beta-oxidation. Functionally, catalyzes the formation of a hydroxyacyl-CoA by addition of water on enoyl-CoA. Also exhibits 3-hydroxyacyl-CoA epimerase and 3-hydroxyacyl-CoA dehydrogenase activities. In Escherichia coli O6:K15:H31 (strain 536 / UPEC), this protein is Fatty acid oxidation complex subunit alpha.